The sequence spans 282 residues: Protoheme IX farnesyltransferase (282 aa).

Transmembrane regions (helical) follow at residues 40-60 (LVLA…FNMV), 87-107 (AVLA…AVNP), 108-128 (YVFV…TVLL), 135-157 (SVVF…ATGG), 162-184 (GVLL…STYY), 204-224 (AGVV…FLAF), 228-248 (LISA…VAVL), and 261-281 (AYRA…LLVL).

This sequence belongs to the UbiA prenyltransferase family. Protoheme IX farnesyltransferase subfamily.

It localises to the cell membrane. The enzyme catalyses heme b + (2E,6E)-farnesyl diphosphate + H2O = Fe(II)-heme o + diphosphate. It functions in the pathway porphyrin-containing compound metabolism; heme O biosynthesis; heme O from protoheme: step 1/1. Its function is as follows. Converts heme B (protoheme IX) to heme O by substitution of the vinyl group on carbon 2 of heme B porphyrin ring with a hydroxyethyl farnesyl side group. This is Protoheme IX farnesyltransferase from Thermofilum pendens (strain DSM 2475 / Hrk 5).